The sequence spans 206 residues: Protein GrpE (206 aa).

Basic and acidic residues predominate over residues 1 to 14 (MDKKNEQQEVREEN). Residues 1-56 (MDKKNEQQEVREENDTSINQESETQVELEEEVVNEECETSSEKTDEKEVDDENVTD) are disordered. The span at 24–39 (TQVELEEEVVNEECET) shows a compositional bias: acidic residues.

This sequence belongs to the GrpE family. Homodimer.

The protein resides in the cytoplasm. Participates actively in the response to hyperosmotic and heat shock by preventing the aggregation of stress-denatured proteins, in association with DnaK and GrpE. It is the nucleotide exchange factor for DnaK and may function as a thermosensor. Unfolded proteins bind initially to DnaJ; upon interaction with the DnaJ-bound protein, DnaK hydrolyzes its bound ATP, resulting in the formation of a stable complex. GrpE releases ADP from DnaK; ATP binding to DnaK triggers the release of the substrate protein, thus completing the reaction cycle. Several rounds of ATP-dependent interactions between DnaJ, DnaK and GrpE are required for fully efficient folding. In Clostridioides difficile (strain 630) (Peptoclostridium difficile), this protein is Protein GrpE.